The primary structure comprises 63 residues: DNA-directed RNA polymerase subunit omega (63 aa).

It belongs to the RNA polymerase subunit omega family. As to quaternary structure, the RNAP catalytic core consists of 2 alpha, 1 beta, 1 beta' and 1 omega subunit. When a sigma factor is associated with the core the holoenzyme is formed, which can initiate transcription.

It catalyses the reaction RNA(n) + a ribonucleoside 5'-triphosphate = RNA(n+1) + diphosphate. Its function is as follows. Promotes RNA polymerase assembly. Latches the N- and C-terminal regions of the beta' subunit thereby facilitating its interaction with the beta and alpha subunits. This chain is DNA-directed RNA polymerase subunit omega, found in Blochmanniella pennsylvanica (strain BPEN).